Reading from the N-terminus, the 239-residue chain is Purine nucleoside phosphorylase DeoD-type (239 aa).

Position 5 (histidine 5) interacts with a purine D-ribonucleoside. Residues glycine 21, arginine 25, arginine 44, and 88-91 contribute to the phosphate site; that span reads RVGS. A purine D-ribonucleoside-binding positions include 180 to 182 and 204 to 205; these read EME and SD. Aspartate 205 functions as the Proton donor in the catalytic mechanism.

Belongs to the PNP/UDP phosphorylase family. Homohexamer; trimer of homodimers.

The enzyme catalyses a purine D-ribonucleoside + phosphate = a purine nucleobase + alpha-D-ribose 1-phosphate. The catalysed reaction is a purine 2'-deoxy-D-ribonucleoside + phosphate = a purine nucleobase + 2-deoxy-alpha-D-ribose 1-phosphate. Catalyzes the reversible phosphorolytic breakdown of the N-glycosidic bond in the beta-(deoxy)ribonucleoside molecules, with the formation of the corresponding free purine bases and pentose-1-phosphate. This is Purine nucleoside phosphorylase DeoD-type from Erwinia tasmaniensis (strain DSM 17950 / CFBP 7177 / CIP 109463 / NCPPB 4357 / Et1/99).